The sequence spans 44 residues: Conotoxin Cl9a (44 aa).

Residues glutamate 7, glutamate 8, and glutamate 24 each carry the 4-carboxyglutamate modification. 3 disulfides stabilise this stretch: cysteine 9/cysteine 33, cysteine 15/cysteine 40, and cysteine 23/cysteine 42.

In terms of tissue distribution, expressed by the venom duct.

It localises to the secreted. This is Conotoxin Cl9a from Californiconus californicus (California cone).